The primary structure comprises 456 residues: Argininosuccinate lyase (456 aa).

This sequence belongs to the lyase 1 family. Argininosuccinate lyase subfamily.

It localises to the cytoplasm. The enzyme catalyses 2-(N(omega)-L-arginino)succinate = fumarate + L-arginine. It participates in amino-acid biosynthesis; L-arginine biosynthesis; L-arginine from L-ornithine and carbamoyl phosphate: step 3/3. In Shewanella pealeana (strain ATCC 700345 / ANG-SQ1), this protein is Argininosuccinate lyase.